Consider the following 190-residue polypeptide: Imidazole glycerol phosphate synthase subunit HisH (190 aa).

Residues 2–190 form the Glutamine amidotransferase type-1 domain; sequence IVGVVDYTVG…IKRFLAVAKR (189 aa). The Nucleophile role is filled by cysteine 73. Catalysis depends on residues histidine 169 and glutamate 171.

In terms of assembly, heterodimer of HisH and HisF.

It localises to the cytoplasm. The catalysed reaction is 5-[(5-phospho-1-deoxy-D-ribulos-1-ylimino)methylamino]-1-(5-phospho-beta-D-ribosyl)imidazole-4-carboxamide + L-glutamine = D-erythro-1-(imidazol-4-yl)glycerol 3-phosphate + 5-amino-1-(5-phospho-beta-D-ribosyl)imidazole-4-carboxamide + L-glutamate + H(+). It catalyses the reaction L-glutamine + H2O = L-glutamate + NH4(+). It functions in the pathway amino-acid biosynthesis; L-histidine biosynthesis; L-histidine from 5-phospho-alpha-D-ribose 1-diphosphate: step 5/9. Functionally, IGPS catalyzes the conversion of PRFAR and glutamine to IGP, AICAR and glutamate. The HisH subunit catalyzes the hydrolysis of glutamine to glutamate and ammonia as part of the synthesis of IGP and AICAR. The resulting ammonia molecule is channeled to the active site of HisF. The chain is Imidazole glycerol phosphate synthase subunit HisH from Pyrobaculum aerophilum (strain ATCC 51768 / DSM 7523 / JCM 9630 / CIP 104966 / NBRC 100827 / IM2).